The primary structure comprises 3573 residues: METCDSPTISRQENGQSTSKLCGTTQLDNEVPEKVAGMEPDRENSSTDDNLRTDERKSEILLGFSVENAAATQVTSAKEIPCNECATSFPSLQKYMEHHCPNARLPVLKDDNESEISELEDSDVENLTGEIVYQPDGSAYIIEDSKESGQNAQTGANSKLFSTAMFLDSLTSAGEKNEQSASAPMSFYPQIINTFHIASSLGKPFTADQAFPNTSALAGVGPVLHSFRVYDLRHKRDKDYLTSDGSAKNSCVSKDVPNNVDLSKFDGCVSDGKRKPVLMCFLCKLSFGYIRSFVTHAVHDHRMTLNEEEQKLLSNKYVSAIIQGIGKDKEPLISFLEPKKSTSVYPHFSTTNLIGPDPTFRGLWSAFHVENGDSLQAGFAFLKGSASTAGSAEQPVGITQMPKAEVNLGGLSSLVANAPITSVSLSHSSSESNKLSESKDQENNCERQKETNTLHPNGEFPIKSEPTEPVEEEDEDTYSNELDDDEVLGELADSIGSKDFPLLNQSISPLSSSVLKFIEKGTSSSSATVSDDTDKTKQTAAHRHNSNVTSNYSISGKDFADASASKDSPTALHPNETARGDEDSSVTPHQHSFTPSTPSAGDGSPGSGIECPKCDTVLGSSRSLGGHMTMMHSRNSCKTLKCPKCNWHYKYQQTLEAHMKEKHPEPGGSCVYCKTGQPHPRLARGESYTCGYKPFRCEVCNYSTTTKGNLSIHMQSDKHLNNVQNLQNGNGEQVYGHTAPPSNPALSGCGTPSPSKPKQKPTWRCEVCDYETNVARNLRIHMTSEKHMHNMMLLQQNMKQIQHNLHLGLAPAEAELYQYYLAQNIGLTGMKLENPADPQMMINPFQLDPATAAALAPGLGELSPYISDPALKLFQCAVCNKFTSDSLEALSVHVSSERLLPEEEWRAVIGDIYQCKLCNYNTQLKANFQLHCKTDKHMQKYQLVAHIKEGGKTNEWRLKCIAIGNPVHLKCNACDYYTNSVDKLRLHTTNHRHEAALKLYKHLQKHESTVNPDSCYYYCALCDYSTKVKLNLVQHVRSVKHQQTEGLRKLQLHQQGLAPEEDNLSEIFFVKDCPPNELEVAQLGCRTCDISLTEQGEDTEGSAKSTSVAIGDDKDSSERDNTEAKKSSKDSVNTVVGAQQLLLAKEEDGAAKKSKPPEDNKFCHEQFYQCPYCNYNSRDPNRIQMHVLSQHSMQPVICCPLCQDVLSNKMHLQLHLTHLHSVSPDCVEKLLMTVPVPDVMMPNSMLLPAAASEKSERDTPATITAEGSGKYSGESPVDEKSTPGTDESKPGMEIKSEEQKPPKESAETPDWNKSGSKDIKTTDSMPDQLNEQQKKQQLSVSDRHVYKYRCNHCSLAFKTMQKLQIHSQYHAIRAATMCSLCQRSFRTFQALKKHLEAGHPELNEAELQQLCASLPVNGELWAEGESMGQDDHALEQEIERDYEMEQEGKASPVGSDSSSIPDDMGSEPKRTLPFRKGPNFTMEKFLDPSRPYKCTVCKESFTQKNILLVHYNSVSHLHKLKKVLQEASSPVPQETNSNTDNKPYKCSICNVAYSQSSTLEIHMRSVLHQTKARAAKLEPSGNISSGNSVAGNVNSPSQGILDSMSLPAVNSKEPHLDAKELNKKQASELISAQPTHHPPQSPAQLQMQLQHELQQQAAFFQPQFLNPAFLPHFPMTPEALLQFQQPQFLFPFYIPGTEFSLSPDLGLPGSATFGMPGMAGMTGSLLEDLKQQIQTQHHVGQTQLQILQQQAQQYQSTQPQLQSQKQQQQSSKLMKAEQTSLVSTDCQLIKDMPSYKESEEISEKQEKPKQEFTNESEGLKENKDMKKPKSSEPAIPPPRIASGARGNAAKALLENFGFELVIQYNENRQKVQKKGKTGEGENTDKLECGTCSKLFSNILILKSHQEHVHGQFFPYGALEKFARQYREAYDKLYPISPSSPETPPPPPPPPPPPPPPPPPTPSQPSSAGAGKIQNTTPTPLQAPPPTPPPPPPPPPPPPPPPPPPSAPPQVQLPVSLDLPLFPPIMMQPVQHPALPPQLALQLPPMDTLSADLTQLCQQQLGLDPNFLRHSQFKRPRTRITDDQLKILRAYFDINNSPSEEQIQEMAEKSGLSQKVIKHWFRNTLFKERQRNKDSPYNFSNPPITVLEDIRIDPQPSAVEPYKSDASFSKRSSRTRFTDYQLRVLQDFFDTNAYPKDDEIEQLSTVLNLPTRVIVVWFQNARQKARKSYENQAETKDNEKRELTNERYIRTSNMQYQCKKCSVVFPRIFDLITHQKKQCYKDEDDDAQDESQTEDSMDASDQTVYKNCTVSGQNDASKSLAVTAASSGSGSSTPLIPSPKPEPEKASPKSESTEKPKPNETISKQTDTTSQSSKPVQSASVTPSDPQPSASQPQQQKQSQIIGRPPSTSQTTPVPSSPLPISMTPLQNSLPPQLLQYQCDQCTVAFPTLELWQEHQHMHFLAAQNQFIHSQFLERPMDMPYMIFDPNNPLMTGQLLNSSLAQMPPQTGSSHAAHPATVSGSMKRKLDDKEDNNCSEKEGGNSGEDQHRDKRLRTTITPEQLEILYEKYLLDSNPTRKMLDHIAREVGLKKRVVQVWFQNTRARERKGQFRAVGPAQSHKRCPFCRALFKAKSALESHIRSRHWNEGKQAGYSLPPSPLISTEDGGDSPQKYIFFDYPSLSLAKTELSSENELASTVSTPISKTAEMSPKNLLSPSSFKAESSEDIENLNAPPADSAYDQNKTDFDETSSINTAISDATTGDEGNNEMESTTGSSGDAKPASPPKEPKPLVNDALTKAATTPTNENTDDKFLFSLTSPSIHFSEKDGDHDQSYYITDDPDDNADRSETSSIADPSSPNPFGASNPFKSKNSDRPGHKRFRTQMSNLQLKVLKACFSDYRTPTMQECEMLGNEIGLPKRVVQVWFQNARAKEKKFKINIGKPFMINQTGPDGTKPECSLCGVKYSARLSIRDHIFSKQHITKVRETVGSQLDREKDYLAPTTVRQLMAQQELDRIKKATDVLGLTVQQPGMMDSSSLHGISLPAAYPGLPGLPPVLLPGMNGPSSLPGFPQSSNTLTSPGAGMLGFPTSATSSPALSLSSAPSKPLLQTPPPPPPPPPPPPPPPPPPPPPPSSSLSGQQTEQQSKESEKKNTINKPNKVKKIKEEELEANKPEKHLKKEEKISSALSVLGKVVGEAHVDPTQLQALQNAIAGDPASFIGGQFLPYFIPGFASYFTPQLPGTVQGGYLPPVCGMESLFPYGPAVPQTIAGLSPGALLQQYQQYQQNLQDSLQKQQKQQQEQQQKQVQAKSSKAENDQQQNSSDTSETKEDRSSATESTKEEPQLDSKSADFSDTYIVPFVKYEFICRKCQMMFTDEDAAVNHQKSFCYFGQPLIDPQETVLRVPVSKYQCLACDVAISGNEALSQHLQSSLHKEKTIKQAMRNAKEHVRLLPHSVCSPNPNTTSTSQSAASSNNTYPHLSCFSMKSWPNILFQASARKAASSPSSPPSLSLPSTVTSSLCSTSGVQTSLPTESCSDESDSELSQKLEDLDNSLEVKAKPASGLDGNFNSIRMDMFSV.

Residues 1-28 (METCDSPTISRQENGQSTSKLCGTTQLD) show a composition bias toward polar residues. 3 disordered regions span residues 1 to 54 (METC…LRTD), 425 to 479 (LSHS…DTYS), and 522 to 606 (TSSS…GSPG). Basic and acidic residues-rich tracts occupy residues 39-54 (EPDR…LRTD) and 434-452 (KLSE…KETN). The segment covering 468 to 479 (EPVEEEDEDTYS) has biased composition (acidic residues). Over residues 585–599 (SVTPHQHSFTPSTPS) the composition is skewed to polar residues. 3 consecutive C2H2-type zinc fingers follow at residues 609–632 (IECP…TMMH), 640–663 (LKCP…KEKH), and 695–719 (FRCE…SDKH). A C2H2-type 4; degenerate zinc finger spans residues 763 to 785 (WRCEVCDYETNVARNLRIHMTSE). C2H2-type zinc fingers lie at residues 913-937 (YQCK…TDKH), 969-991 (LKCN…TTNH), and 1017-1041 (YYCA…SVKH). Positions 1096 to 1132 (GEDTEGSAKSTSVAIGDDKDSSERDNTEAKKSSKDSV) are disordered. The span at 1111–1129 (GDDKDSSERDNTEAKKSSK) shows a compositional bias: basic and acidic residues. 2 consecutive C2H2-type zinc fingers follow at residues 1168–1191 (YQCP…LSQH) and 1197–1220 (ICCP…THLH). The disordered stretch occupies residues 1250–1340 (AASEKSERDT…EQQKKQQLSV (91 aa)). The segment covering 1277 to 1306 (VDEKSTPGTDESKPGMEIKSEEQKPPKESA) has biased composition (basic and acidic residues). Over residues 1322–1340 (TDSMPDQLNEQQKKQQLSV) the composition is skewed to polar residues. 2 C2H2-type zinc fingers span residues 1348–1370 (YRCN…SQYH) and 1376–1399 (TMCS…EAGH). The disordered stretch occupies residues 1442–1476 (YEMEQEGKASPVGSDSSSIPDDMGSEPKRTLPFRK). 2 C2H2-type zinc fingers span residues 1492 to 1518 (YKCT…SHLH) and 1544 to 1568 (YKCS…SVLH). Disordered regions lie at residues 1577-1596 (LEPS…VNSP) and 1795-1843 (YKES…IASG). Residues 1580 to 1596 (SGNISSGNSVAGNVNSP) show a composition bias toward low complexity. Positions 1795–1830 (YKESEEISEKQEKPKQEFTNESEGLKENKDMKKPKS) are enriched in basic and acidic residues. The C2H2-type 14 zinc finger occupies 1886–1909 (LECGTCSKLFSNILILKSHQEHVH). The disordered stretch occupies residues 1933-2013 (YPISPSSPET…PSAPPQVQLP (81 aa)). Composition is skewed to pro residues over residues 1940–1962 (PETP…PTPS) and 1980–2007 (LQAP…PSAP). DNA-binding regions (homeobox) lie at residues 2072–2131 (FKRP…RQRN) and 2169–2228 (KRSS…RKSY). Residues 2255–2279 (YQCKKCSVVFPRIFDLITHQKKQCY) form a C2H2-type 15; degenerate zinc finger. 2 disordered regions span residues 2278 to 2300 (CYKD…DASD) and 2318 to 2426 (SLAV…TPLQ). Residues 2281 to 2297 (DEDDDAQDESQTEDSMD) show a composition bias toward acidic residues. Residues 2318–2334 (SLAVTAASSGSGSSTPL) show a composition bias toward low complexity. The segment covering 2340-2357 (PEPEKASPKSESTEKPKP) has biased composition (basic and acidic residues). 2 stretches are compositionally biased toward low complexity: residues 2360–2373 (TISK…QSSK) and 2382–2413 (PSDP…TTPV). A C2H2-type 16 zinc finger spans residues 2436 to 2458 (YQCDQCTVAFPTLELWQEHQHMH). Residues 2499–2509 (LAQMPPQTGSS) show a composition bias toward polar residues. The tract at residues 2499–2553 (LAQMPPQTGSSHAAHPATVSGSMKRKLDDKEDNNCSEKEGGNSGEDQHRDKRLRT) is disordered. Residues 2523-2547 (RKLDDKEDNNCSEKEGGNSGEDQHR) are compositionally biased toward basic and acidic residues. Positions 2548–2607 (DKRLRTTITPEQLEILYEKYLLDSNPTRKMLDHIAREVGLKKRVVQVWFQNTRARERKGQ) form a DNA-binding region, homeobox 3. Residues 2618-2641 (KRCPFCRALFKAKSALESHIRSRH) form a C2H2-type 17 zinc finger. Disordered regions lie at residues 2704–2788 (EMSP…PKPL) and 2820–2875 (FSEK…PGHK). Composition is skewed to polar residues over residues 2709-2718 (NLLSPSSFKA) and 2746-2773 (TSSI…TGSS). Basic and acidic residues predominate over residues 2820-2829 (FSEKDGDHDQ). Residues 2874 to 2933 (HKRFRTQMSNLQLKVLKACFSDYRTPTMQECEMLGNEIGLPKRVVQVWFQNARAKEKKFK) constitute a DNA-binding region (homeobox 4). The segment at 2952–2976 (PECSLCGVKYSARLSIRDHIFSKQH) adopts a C2H2-type 18; degenerate zinc-finger fold. Disordered regions lie at residues 3060–3174 (PSSL…KHLK) and 3287–3343 (LQKQ…LDSK). Residues 3084 to 3104 (PTSATSSPALSLSSAPSKPLL) are compositionally biased toward low complexity. Over residues 3105 to 3129 (QTPPPPPPPPPPPPPPPPPPPPPPS) the composition is skewed to pro residues. The span at 3159 to 3174 (IKEEELEANKPEKHLK) shows a compositional bias: basic and acidic residues. Residues 3271-3316 (ALLQQYQQYQQNLQDSLQKQQKQQQEQQQKQVQAKSSKAENDQQQN) are a coiled coil. The span at 3287-3305 (LQKQQKQQQEQQQKQVQAK) shows a compositional bias: low complexity. Residues 3321-3343 (SETKEDRSSATESTKEEPQLDSK) are compositionally biased toward basic and acidic residues. A C2H2-type 19; degenerate zinc finger spans residues 3360 to 3384 (FICRKCQMMFTDEDAAVNHQKSFCY). The C2H2-type 20 zinc finger occupies 3404 to 3428 (YQCLACDVAISGNEALSQHLQSSLH). 2 disordered regions span residues 3449–3468 (HSVC…AASS) and 3518–3543 (TSGV…QKLE). Over residues 3453–3468 (SPNPNTTSTSQSAASS) the composition is skewed to low complexity.

The protein belongs to the krueppel C2H2-type zinc-finger protein family.

The protein localises to the nucleus. Functionally, may play a role in neural and muscle differentiation. May be involved in transcriptional regulation. The polypeptide is Zinc finger homeobox protein 4 (ZFHX4) (Gallus gallus (Chicken)).